Reading from the N-terminus, the 269-residue chain is 4-hydroxy-tetrahydrodipicolinate reductase (269 aa).

NAD(+)-binding positions include 8-13, glutamate 34, 98-100, and 122-125; these read GASGRM, GTT, and APNM. Histidine 155 acts as the Proton donor/acceptor in catalysis. Histidine 156 is a binding site for (S)-2,3,4,5-tetrahydrodipicolinate. Residue lysine 159 is the Proton donor of the active site. Position 165-166 (165-166) interacts with (S)-2,3,4,5-tetrahydrodipicolinate; sequence GT.

It belongs to the DapB family.

It is found in the cytoplasm. The enzyme catalyses (S)-2,3,4,5-tetrahydrodipicolinate + NAD(+) + H2O = (2S,4S)-4-hydroxy-2,3,4,5-tetrahydrodipicolinate + NADH + H(+). It catalyses the reaction (S)-2,3,4,5-tetrahydrodipicolinate + NADP(+) + H2O = (2S,4S)-4-hydroxy-2,3,4,5-tetrahydrodipicolinate + NADPH + H(+). The protein operates within amino-acid biosynthesis; L-lysine biosynthesis via DAP pathway; (S)-tetrahydrodipicolinate from L-aspartate: step 4/4. Catalyzes the conversion of 4-hydroxy-tetrahydrodipicolinate (HTPA) to tetrahydrodipicolinate. The protein is 4-hydroxy-tetrahydrodipicolinate reductase of Desulfotalea psychrophila (strain LSv54 / DSM 12343).